Consider the following 74-residue polypeptide: Guanine nucleotide-binding protein G(T) subunit gamma-T1 (74 aa).

Residue Cys71 is modified to Cysteine methyl ester. A lipid anchor (S-farnesyl cysteine) is attached at Cys71. A propeptide spans 72–74 (VIS) (removed in mature form).

It belongs to the G protein gamma family. As to quaternary structure, g proteins are composed of 3 units, alpha, beta and gamma. Retinal rod outer segment.

It is found in the cell membrane. Functionally, guanine nucleotide-binding proteins (G proteins) are involved as a modulator or transducer in various transmembrane signaling systems. The beta and gamma chains are required for the GTPase activity, for replacement of GDP by GTP, and for G protein-effector interaction. This is Guanine nucleotide-binding protein G(T) subunit gamma-T1 (Gngt1) from Mus musculus (Mouse).